The primary structure comprises 350 residues: Small ribosomal subunit biogenesis GTPase RsgA (350 aa).

Over residues 1–17 (MSKNKLSKGQQRRVNAN) the composition is skewed to polar residues. The segment at 1–33 (MSKNKLSKGQQRRVNANHQRRLKTSKEKPDYDD) is disordered. The CP-type G domain occupies 104-273 (TSVLTRPDFY…VIDSPGVREF (170 aa)). GTP contacts are provided by residues 160–163 (NKID) and 214–222 (GQSGVGKSS). Residues C297, C302, H304, and C310 each contribute to the Zn(2+) site.

The protein belongs to the TRAFAC class YlqF/YawG GTPase family. RsgA subfamily. As to quaternary structure, monomer. Associates with 30S ribosomal subunit, binds 16S rRNA. Zn(2+) serves as cofactor.

The protein resides in the cytoplasm. In terms of biological role, one of several proteins that assist in the late maturation steps of the functional core of the 30S ribosomal subunit. Helps release RbfA from mature subunits. May play a role in the assembly of ribosomal proteins into the subunit. Circularly permuted GTPase that catalyzes slow GTP hydrolysis, GTPase activity is stimulated by the 30S ribosomal subunit. In Escherichia coli (strain ATCC 8739 / DSM 1576 / NBRC 3972 / NCIMB 8545 / WDCM 00012 / Crooks), this protein is Small ribosomal subunit biogenesis GTPase RsgA.